A 20-amino-acid polypeptide reads, in one-letter code: XXLKGIPTDEEQATGLEEYA.

The interval 1 to 20 (XXLKGIPTDEEQATGLEEYA) is disordered.

It belongs to the cytochrome c oxidase subunit 5B family. In terms of assembly, component of the cytochrome c oxidase (complex IV, CIV), a multisubunit enzyme composed of 14 subunits. The complex is composed of a catalytic core of 3 subunits MT-CO1, MT-CO2 and MT-CO3, encoded in the mitochondrial DNA, and 11 supernumerary subunits COX4I, COX5A, COX5B, COX6A, COX6B, COX6C, COX7A, COX7B, COX7C, COX8 and NDUFA4, which are encoded in the nuclear genome. The complex exists as a monomer or a dimer and forms supercomplexes (SCs) in the inner mitochondrial membrane with NADH-ubiquinone oxidoreductase (complex I, CI) and ubiquinol-cytochrome c oxidoreductase (cytochrome b-c1 complex, complex III, CIII), resulting in different assemblies (supercomplex SCI(1)III(2)IV(1) and megacomplex MCI(2)III(2)IV(2)).

It is found in the mitochondrion inner membrane. The protein operates within energy metabolism; oxidative phosphorylation. Functionally, component of the cytochrome c oxidase, the last enzyme in the mitochondrial electron transport chain which drives oxidative phosphorylation. The respiratory chain contains 3 multisubunit complexes succinate dehydrogenase (complex II, CII), ubiquinol-cytochrome c oxidoreductase (cytochrome b-c1 complex, complex III, CIII) and cytochrome c oxidase (complex IV, CIV), that cooperate to transfer electrons derived from NADH and succinate to molecular oxygen, creating an electrochemical gradient over the inner membrane that drives transmembrane transport and the ATP synthase. Cytochrome c oxidase is the component of the respiratory chain that catalyzes the reduction of oxygen to water. Electrons originating from reduced cytochrome c in the intermembrane space (IMS) are transferred via the dinuclear copper A center (CU(A)) of subunit 2 and heme A of subunit 1 to the active site in subunit 1, a binuclear center (BNC) formed by heme A3 and copper B (CU(B)). The BNC reduces molecular oxygen to 2 water molecules using 4 electrons from cytochrome c in the IMS and 4 protons from the mitochondrial matrix. This Oncorhynchus mykiss (Rainbow trout) protein is Cytochrome c oxidase subunit 5B heart, mitochondrial.